The chain runs to 512 residues: MTAGEDCRTILVAGTASHVGKSTVAAGLCRLLADRGLSVAPFKAQNMSNNARAVPVADGAPPAADPWGEIGVSQYVQARAARTAASTDHNPVLLKPRGDAESQLVVDGRAVGHYSAGSYYESHWADARDAAAAAHARLAADNDVVVAEGAGSIAELNLHDRDLANLETARFADATILLVVDIERGGAFASLHGTLALLPDDIRDRVAGAVITKFRGDRSLLDPGITEIEARTGVPVLGVIPHDDPGLPAEDSVSLPDPSERVVDGGQDGVPDAASVTVAVPHLPHISNFTDLAPLARTPGVRVAYQPLDAPLAAADAVVLPGTKNTVDDLRAAREAGLGRALRAFDGPIVGLCGGYQMLGDRITDAATESTADDLGAVDGVGVLPVETAFQPDKRVEAVTRELADCGALGGATGAVTGYEIHMGRTTVPDGVPQPVGPASAARGRVLGTYLHGLFGNDAARRGFRDAVFAAAGVEQPAPADTPDQSPSDAAAALVDAHVDLDPLGVPPAPDA.

Residues 275-460 form the GATase cobBQ-type domain; that stretch reads SVTVAVPHLP…LHGLFGNDAA (186 aa). The active-site Nucleophile is the Cys-353. Residue His-452 is part of the active site.

The protein belongs to the CobB/CobQ family. CobQ subfamily.

It participates in cofactor biosynthesis; adenosylcobalamin biosynthesis. Functionally, catalyzes amidations at positions B, D, E, and G on adenosylcobyrinic A,C-diamide. NH(2) groups are provided by glutamine, and one molecule of ATP is hydrogenolyzed for each amidation. In Halobacterium salinarum (strain ATCC 29341 / DSM 671 / R1), this protein is Probable cobyric acid synthase.